The sequence spans 207 residues: Venom allergen 5 (207 aa).

Intrachain disulfides connect C4–C16, C8–C105, and C29–C97. In terms of domain architecture, SCP spans 49 to 192 (DEHNRFRQKV…MKSHYLVCNY (144 aa)). Phosphotyrosine is present on Y111. The N-linked (Glc) (glycation) lysine glycan is linked to K141. Cysteines 173 and 190 form a disulfide.

The protein belongs to the CRISP family. Venom allergen 5-like subfamily. In terms of processing, glycosylated. In terms of tissue distribution, expressed by the venom gland.

The protein resides in the secreted. The polypeptide is Venom allergen 5 (Polybia paulista (Neotropical social wasp)).